We begin with the raw amino-acid sequence, 284 residues long: Isopentenyl-diphosphate delta-isomerase (284 aa).

Residue Lys77 coordinates substrate. Mg(2+) contacts are provided by His81 and His92. The region spanning 90-256 is the Nudix hydrolase domain; that stretch reads LLHRAFSVFL…SLVFTPWFKL (167 aa). Positions 111 and 115 each coordinate substrate. Cys127 is a catalytic residue. Ser128 serves as a coordination point for substrate. The short motif at 128 to 172 is the Nudix box element; that stretch reads SHPLCVPSELGVDSSLEGSKDVNNLTNAVKGAKVAAQRKLEHELG. Positions 204 and 206 each coordinate Mg(2+). The active site involves Glu206.

The protein belongs to the IPP isomerase type 1 family. The cofactor is Mg(2+).

It localises to the cytoplasm. The enzyme catalyses isopentenyl diphosphate = dimethylallyl diphosphate. It participates in isoprenoid biosynthesis; dimethylallyl diphosphate biosynthesis; dimethylallyl diphosphate from isopentenyl diphosphate: step 1/1. Isopentenyl-diphosphate delta-isomerase; part of the second module of ergosterol biosynthesis pathway that includes the middle steps of the pathway. IDI1 catalyzes the 1,3-allylic rearrangement of isopentenyl (IPP) to its highly electrophilic allylic isomer, dimethylallyl diphosphate (DMAPP). The second module is carried out in the vacuole and involves the formation of farnesyl diphosphate, which is also an important intermediate in the biosynthesis of ubiquinone, dolichol, heme and prenylated proteins. Activity by the mevalonate kinase ERG12 first converts mevalonate into 5-phosphomevalonate. 5-phosphomevalonate is then further converted to 5-diphosphomevalonate by the phosphomevalonate kinase ERG8. The diphosphomevalonate decarboxylase MVD then produces isopentenyl diphosphate. The isopentenyl-diphosphate delta-isomerase IDI1 then catalyzes the 1,3-allylic rearrangement of the homoallylic substrate isopentenyl (IPP) to its highly electrophilic allylic isomer, dimethylallyl diphosphate (DMAPP). Finally the farnesyl diphosphate synthase ERG20 catalyzes the sequential condensation of isopentenyl pyrophosphate with dimethylallyl pyrophosphate, and then with the resultant geranylpyrophosphate to the ultimate product farnesyl pyrophosphate. The protein is Isopentenyl-diphosphate delta-isomerase of Candida albicans (strain SC5314 / ATCC MYA-2876) (Yeast).